A 743-amino-acid chain; its full sequence is POU domain, class 2, transcription factor 1 (743 aa).

The segment covering M1–S11 has biased composition (polar residues). Disordered regions lie at residues M1 to P34, S67 to A95, A258 to S283, and S357 to K381. Over residues S81 to A95 the composition is skewed to low complexity. T270 and T276 each carry phosphothreonine. Residues E280 to E354 form the POU-specific domain. At S283 the chain carries Phosphoserine. A compositionally biased stretch (low complexity) spans S357–P371. Residues R379–N438 constitute a DNA-binding region (homeobox). Residues S385 and S448 each carry the phosphoserine modification. Over residues V494–N504 the composition is skewed to polar residues. The interval V494–L557 is disordered. The segment covering T505–L557 has biased composition (low complexity).

The protein belongs to the POU transcription factor family. Class-2 subfamily. As to quaternary structure, interacts with POU2AF1; the interaction increases POU2F1 transactivation activity. Interacts with NR3C1, AR, PGR and HCFC1. (Microbial infection) Associates with the herpes simplex virus VP16-induced complex; binding to HCFC1 activates the viral transcriptional activator VP16 for association with POU2F1, to form a multiprotein-DNA complex responsible for activating transcription of the viral immediate early genes. In terms of assembly, (Microbial infection) Interacts with human herpesvirus 8 (KSHV) protein RTA/ORF50; this interaction enhances RTA/ORF50-mediated transactivation of several viral promoters including K-bZIP promoter. Phosphorylated by PRKDC. As to expression, ubiquitous. Isoform 2 is lymphocyte-specific.

The protein localises to the nucleus. Transcription factor that binds to the octamer motif (5'-ATTTGCAT-3') and activates the promoters of the genes for some small nuclear RNAs (snRNA) and of genes such as those for histone H2B and immunoglobulins. Modulates transcription transactivation by NR3C1, AR and PGR. Its function is as follows. (Microbial infection) In case of human herpes simplex virus (HSV) infection, POU2F1 forms a multiprotein-DNA complex with the viral transactivator protein VP16 and HCFC1 thereby enabling the transcription of the viral immediate early genes. This is POU domain, class 2, transcription factor 1 (POU2F1) from Homo sapiens (Human).